The following is a 2606-amino-acid chain: Large tegument protein deneddylase (2606 aa).

A deubiquitination activity region spans residues 1–235; it reads MAFQAQTDTG…LKRSGAYVNL (235 aa). Residues 14–225 form the Peptidase C76 domain; it reads LATASSHQGD…LLANYGIASA (212 aa). Residues cysteine 34, aspartate 163, and histidine 165 contribute to the active site. Disordered regions lie at residues 318-349, 390-411, 1020-1135, 2253-2316, and 2434-2458; these read IAIS…PNEA, DTDS…KSGQ, KKGL…ESSE, PEIH…PTPL, and PPHD…ERKY. Positions 1038–1050 are enriched in polar residues; sequence TPVTDSKLIQDSQ. Positions 1051–1061 are enriched in basic and acidic residues; the sequence is QNDRHQKEKPL. The segment covering 1085 to 1097 has biased composition (polar residues); sequence KPQNLSLPVSTNK. The span at 1105–1132 shows a compositional bias: low complexity; that stretch reads ESSPIESTSPSHSPVSSMESQNGSFSLE. Residues 2304 to 2316 are compositionally biased toward pro residues; the sequence is PNPPRPTTFPTPL.

It belongs to the herpesviridae large tegument protein family. As to quaternary structure, interacts with host CUL1 and CUL4A; these interactions inhibit the E3 ligase activity of cullins. Interacts with inner tegument protein. Interacts with capsid vertex specific component CVC2. Interacts with the major capsid protein/MCP.

Its subcellular location is the virion tegument. The protein localises to the host cytoplasm. The protein resides in the host nucleus. It carries out the reaction Thiol-dependent hydrolysis of ester, thioester, amide, peptide and isopeptide bonds formed by the C-terminal Gly of ubiquitin (a 76-residue protein attached to proteins as an intracellular targeting signal).. Functionally, large tegument protein that plays multiple roles in the viral cycle. During viral entry, remains associated with the capsid while most of the tegument is detached and participates in the capsid transport toward the host nucleus. Plays a role in the routing of the capsid at the nuclear pore complex and subsequent uncoating. Within the host nucleus, acts as a deneddylase and promotes the degradation of nuclear CRLs (cullin-RING ubiquitin ligases) and thereby stabilizes nuclear CRL substrates, while cytoplasmic CRLs remain unaffected. These modifications prevent host cell cycle S-phase progression and create a favorable environment allowing efficient viral genome replication. Participates later in the secondary envelopment of capsids. Indeed, plays a linker role for the association of the outer viral tegument to the capsids together with the inner tegument protein. The protein is Large tegument protein deneddylase (64) of Connochaetes taurinus (Blue wildebeest).